The chain runs to 409 residues: Tryptophan synthase beta chain (409 aa).

Lys92 is subject to N6-(pyridoxal phosphate)lysine.

The protein belongs to the TrpB family. Tetramer of two alpha and two beta chains. Pyridoxal 5'-phosphate serves as cofactor.

It catalyses the reaction (1S,2R)-1-C-(indol-3-yl)glycerol 3-phosphate + L-serine = D-glyceraldehyde 3-phosphate + L-tryptophan + H2O. The protein operates within amino-acid biosynthesis; L-tryptophan biosynthesis; L-tryptophan from chorismate: step 5/5. The beta subunit is responsible for the synthesis of L-tryptophan from indole and L-serine. This Methanococcus voltae protein is Tryptophan synthase beta chain (trpB).